Consider the following 1061-residue polypeptide: Protein pid-5 (1061 aa).

It belongs to the peptidase M24B family. In terms of assembly, may interact with pid-2, app-1 and prmt-5.

It localises to the cytoplasm. The protein localises to the perinuclear region. The protein resides in the P-body. Its function is as follows. Together with pid-4, it is involved in gene silencing mediated by a class of 21 nucleotide PIWI-interacting RNAs (piRNAs) that possess a uracil residue at the 5'-end (also called 21U-RNAs) and guide the Piwi protein prg-1 to its DNA targets for silencing. Together with pid-4, it is required for the biogenesis of secondary and tertiary 22G-siRNAs. Specifically, promotes the production of 22G-siRNAs from the 5' end of target mRNAs. Together with pid-4, plays a role in small RNA-directed transgenerational epigenetic inheritance (also called RNAe) over several generations and germline immortality. Together with pid-4, plays a role in the formation of liquid-like condensates in the cytoplasm called Z granules. In Caenorhabditis elegans, this protein is Protein pid-5.